Here is a 161-residue protein sequence, read N- to C-terminus: Phosphopantetheine adenylyltransferase (161 aa).

Substrate is bound at residue threonine 9. ATP-binding positions include 9 to 10 and histidine 17; that span reads TF. Residues lysine 41, leucine 73, and arginine 87 each coordinate substrate. ATP-binding positions include 88 to 90, glutamate 98, and 123 to 129; these read GMR and WSYVSST.

This sequence belongs to the bacterial CoaD family. In terms of assembly, homohexamer. Requires Mg(2+) as cofactor.

Its subcellular location is the cytoplasm. The catalysed reaction is (R)-4'-phosphopantetheine + ATP + H(+) = 3'-dephospho-CoA + diphosphate. Its pathway is cofactor biosynthesis; coenzyme A biosynthesis; CoA from (R)-pantothenate: step 4/5. In terms of biological role, reversibly transfers an adenylyl group from ATP to 4'-phosphopantetheine, yielding dephospho-CoA (dPCoA) and pyrophosphate. The protein is Phosphopantetheine adenylyltransferase of Actinobacillus succinogenes (strain ATCC 55618 / DSM 22257 / CCUG 43843 / 130Z).